The sequence spans 327 residues: Geranylgeranyl transferase type-2 subunit alpha (327 aa).

PFTA repeat units follow at residues 44 to 78 (YSIE…SLAS), 84 to 118 (FWDK…HYPT), 123 to 157 (VWQT…NIES), 163 to 197 (LDKE…RMFQ), and 207 to 241 (YIRT…NDIV).

Belongs to the protein prenyltransferase subunit alpha family. As to quaternary structure, heterodimer of an alpha and a beta subunit.

The enzyme catalyses geranylgeranyl diphosphate + L-cysteinyl-[protein] = S-geranylgeranyl-L-cysteinyl-[protein] + diphosphate. In terms of biological role, catalyzes the transfer of a geranyl-geranyl moiety from geranyl-geranyl pyrophosphate to proteins having the C-terminal -XCC or -XCXC, where both cysteines may become modified. Acts on YPT1 and SEC4. This chain is Geranylgeranyl transferase type-2 subunit alpha (BET4), found in Saccharomyces cerevisiae (strain ATCC 204508 / S288c) (Baker's yeast).